The sequence spans 260 residues: MGYIKRIGLYISIFILIVMVAGCGKDNEIKEYSKETQIKNSFAKTLDMYPIKNLEDLYDKEGYRDGEFKKGDKGTWTLLTSFSKSNKPGVIDDEGMVLYLNRNTKKATGYYFVNKIYDDISKNQNEKKYRVELKNNKIVLLDNVEDEKLKQKIENFKFFSQYADFKDLKNYQDGSITTNENVPSYEAEYKLNNSDTNVKKLRDIYPITTKKAAILKLHIDGDIKGSSVGYKKIEYKFSKVKDQETTLRDYLNFGPSDEDS.

Positions 1–22 are cleaved as a signal peptide; sequence MGYIKRIGLYISIFILIVMVAG. A lipid anchor (N-palmitoyl cysteine) is attached at C23. The S-diacylglycerol cysteine moiety is linked to residue C23.

It belongs to the staphylococcal tandem lipoprotein family.

The protein resides in the cell membrane. This is an uncharacterized protein from Staphylococcus aureus (strain bovine RF122 / ET3-1).